A 225-amino-acid polypeptide reads, in one-letter code: Insulin-induced gene 2 protein (225 aa).

The Cytoplasmic portion of the chain corresponds to 1–28 (MAEGETKSPGPKKCGPYISSVTSQSVNL). Residues 29-51 (MIRGVVLFFIGVFLALVLNLLQI) traverse the membrane as a helical segment. The Lumenal segment spans residues 52–70 (QRNVTLFPPDVIASIFSSA). A helical membrane pass occupies residues 71–88 (WWVPPCCGTASAVIGLLY). The Cytoplasmic portion of the chain corresponds to 89–103 (PCIDRHLGEPHKFKR). Residues 104–126 (EWSSVMRCVAVFVGINHASAKVD) form a helical membrane-spanning segment. Topologically, residues 127 to 129 (FDN) are lumenal. The chain crosses the membrane as a helical span at residues 130–148 (NIQLSLTLAALSIGLWWTF). Over 149-153 (DRSRS) the chain is Cytoplasmic. A Phosphoserine modification is found at Ser151. The helical transmembrane segment at 154–175 (GFGLGVGIAFLATLVTQLLVYN) threads the bilayer. Residues 176–189 (GVYQYTSPDFLYVR) lie on the Lumenal side of the membrane. Residues 190-207 (SWLPCIFFAGGITMGNIG) traverse the membrane as a helical segment. The Cytoplasmic segment spans residues 208 to 225 (RQLAMYECKVIAEKSHQE). Cysteine sulfenic acid (-SOH); alternate is present on Cys215. A Glycyl cysteine thioester (Cys-Gly) (interchain with G-Cter in ubiquitin); alternate cross-link involves residue Cys215. The KxHxx signature appears at 219–225 (AEKSHQE).

The protein belongs to the INSIG family. Interacts with SCAP; interaction is direct and only takes place in the presence of sterols; it prevents interaction between SCAP and the coat protein complex II (COPII). Associates with the SCAP-SREBP complex (composed of SCAP and SREBF1/SREBP1 or SREBF2/SREBP2); association is mediated via its interaction with SCAP and only takes place in the presence of sterols. Interacts with RNF139. Interacts with RNF145. Post-translationally, phosphorylation at Ser-151 by PCK1 reduces binding to oxysterol, disrupting the interaction between INSIG2 and SCAP, thereby promoting nuclear translocation of SREBP proteins (SREBF1/SREBP1 or SREBF2/SREBP2) and subsequent transcription of downstream lipogenesis-related genes. Polyubiquitinated by AMFR/gp78 at Cys-215 in some tissues such as adipose tissues, undifferentiated myoblasts and liver, leading to its degradation. In differentiated myotubes, Cys-215 oxidation prevents ubiquitination at the same site, resulting in protein stabilization. In terms of processing, oxidized at Cys-215 in differentiated myotubes, preventing ubiquitination at the same site, and resulting in protein stabilization.

The protein localises to the endoplasmic reticulum membrane. In terms of biological role, oxysterol-binding protein that mediates feedback control of cholesterol synthesis by controlling both endoplasmic reticulum to Golgi transport of SCAP and degradation of HMGCR. Acts as a negative regulator of cholesterol biosynthesis by mediating the retention of the SCAP-SREBP complex in the endoplasmic reticulum, thereby blocking the processing of sterol regulatory element-binding proteins (SREBPs) SREBF1/SREBP1 and SREBF2/SREBP2. Binds oxysterol, including 22-hydroxycholesterol, 24-hydroxycholesterol, 25-hydroxycholesterol and 27-hydroxycholesterol, regulating interaction with SCAP and retention of the SCAP-SREBP complex in the endoplasmic reticulum. In presence of oxysterol, interacts with SCAP, retaining the SCAP-SREBP complex in the endoplasmic reticulum, thereby preventing SCAP from escorting SREBF1/SREBP1 and SREBF2/SREBP2 to the Golgi. Sterol deprivation or phosphorylation by PCK1 reduce oxysterol-binding, disrupting the interaction between INSIG2 and SCAP, thereby promoting Golgi transport of the SCAP-SREBP complex, followed by processing and nuclear translocation of SREBF1/SREBP1 and SREBF2/SREBP2. Also regulates cholesterol synthesis by regulating degradation of HMGCR: initiates the sterol-mediated ubiquitin-mediated endoplasmic reticulum-associated degradation (ERAD) of HMGCR via recruitment of the reductase to the ubiquitin ligase RNF139. This is Insulin-induced gene 2 protein from Sus scrofa (Pig).